The chain runs to 236 residues: Purine nucleoside phosphorylase DeoD-type 2 (236 aa).

Position 5 (His5) interacts with a purine D-ribonucleoside. Residues Gly21, Arg25, Arg44, and 88 to 91 each bind phosphate; that span reads RVGS. Residues 180-182 and 204-205 each bind a purine D-ribonucleoside; these read DME and SD. The Proton donor role is filled by Asp205.

It belongs to the PNP/UDP phosphorylase family. In terms of assembly, homohexamer; trimer of homodimers.

It catalyses the reaction a purine D-ribonucleoside + phosphate = a purine nucleobase + alpha-D-ribose 1-phosphate. The enzyme catalyses a purine 2'-deoxy-D-ribonucleoside + phosphate = a purine nucleobase + 2-deoxy-alpha-D-ribose 1-phosphate. Functionally, catalyzes the reversible phosphorolytic breakdown of the N-glycosidic bond in the beta-(deoxy)ribonucleoside molecules, with the formation of the corresponding free purine bases and pentose-1-phosphate. The protein is Purine nucleoside phosphorylase DeoD-type 2 of Vibrio parahaemolyticus serotype O3:K6 (strain RIMD 2210633).